Consider the following 341-residue polypeptide: Anthranilate phosphoribosyltransferase (341 aa).

5-phospho-alpha-D-ribose 1-diphosphate-binding positions include glycine 79, 82 to 83, threonine 87, 89 to 92, 107 to 115, and serine 119; these read GD, NIST, and KHGNRAVSS. Glycine 79 contributes to the anthranilate binding site. Serine 91 contacts Mg(2+). Asparagine 110 is a binding site for anthranilate. Arginine 165 contacts anthranilate. Positions 224 and 225 each coordinate Mg(2+).

It belongs to the anthranilate phosphoribosyltransferase family. As to quaternary structure, homodimer. It depends on Mg(2+) as a cofactor.

The catalysed reaction is N-(5-phospho-beta-D-ribosyl)anthranilate + diphosphate = 5-phospho-alpha-D-ribose 1-diphosphate + anthranilate. It functions in the pathway amino-acid biosynthesis; L-tryptophan biosynthesis; L-tryptophan from chorismate: step 2/5. Catalyzes the transfer of the phosphoribosyl group of 5-phosphorylribose-1-pyrophosphate (PRPP) to anthranilate to yield N-(5'-phosphoribosyl)-anthranilate (PRA). The polypeptide is Anthranilate phosphoribosyltransferase (Bacillus cereus (strain AH187)).